Consider the following 115-residue polypeptide: NADH-ubiquinone oxidoreductase chain 3 (115 aa).

3 helical membrane passes run 4–24 (LTAL…AFWL), 55–75 (FFLV…LLPL), and 87–107 (MMLT…YEWM).

It belongs to the complex I subunit 3 family. In terms of assembly, core subunit of respiratory chain NADH dehydrogenase (Complex I) which is composed of 45 different subunits. Interacts with TMEM186. Interacts with TMEM242.

It localises to the mitochondrion inner membrane. The catalysed reaction is a ubiquinone + NADH + 5 H(+)(in) = a ubiquinol + NAD(+) + 4 H(+)(out). Functionally, core subunit of the mitochondrial membrane respiratory chain NADH dehydrogenase (Complex I) which catalyzes electron transfer from NADH through the respiratory chain, using ubiquinone as an electron acceptor. Essential for the catalytic activity of complex I. This is NADH-ubiquinone oxidoreductase chain 3 from Peromyscus boylii (Brush deermouse).